The chain runs to 451 residues: Homeobox protein meis3-B (451 aa).

Residues 33–64 (HHSLSQSTPYGSTGAAHRVPMPPGMGSNDGLK) form a disordered region. Residues 34 to 43 (HSLSQSTPYG) show a composition bias toward polar residues. In terms of domain architecture, MEIS N-terminal spans 102–185 (GGDVCSSDSF…PIDLVIDDRD (84 aa)). The segment at 206–272 (NNTWIRDHDE…RDKKRNKKRG (67 aa)) is disordered. Residues 218-230 (STHSGTPGPSSGG) show a composition bias toward low complexity. Over residues 231–242 (LASQSGDNSSEQ) the composition is skewed to polar residues. Positions 267 to 329 (RNKKRGIFPK…NARRRIVQPM (63 aa)) form a DNA-binding region, homeobox.

This sequence belongs to the TALE/MEIS homeobox family.

The protein resides in the nucleus. A caudalizing protein which is required to pattern the anterior/posterior (A/P) axis during central nervous system (CNS) formation. Inhibits anterior neural expression and acts as a transcriptional activator to induce posterior neural gene expression. Maintains a proper A/P balance required for hindbrain formation by activating the FGF/MAPK pathway, which modulates the planar cell polarity (PCP) pathway. Interacts with retinoid signaling during hindbrain patterning. The sequence is that of Homeobox protein meis3-B (meis3-b) from Xenopus laevis (African clawed frog).